The chain runs to 47 residues: Turripeptide Ici9.1 (47 aa).

3 disulfide bridges follow: cysteine 1–cysteine 31, cysteine 5–cysteine 24, and cysteine 13–cysteine 45. The region spanning 1-47 is the Kazal-like domain; the sequence is CLSVCSMEYWPVCGSDGKTYPNECHLTSEACMSNTDITVAHVGKCDQ.

This sequence belongs to the conopeptide P-like superfamily. Expressed by the venom duct.

Its subcellular location is the secreted. Acts as a neurotoxin by inhibiting an ion channel. May also act as a serine protease inhibitor, since it possess the kazal serine protease inhibitor signature. This chain is Turripeptide Ici9.1, found in Iotyrris cingulifera (Sea snail).